Reading from the N-terminus, the 342-residue chain is L-threonine 3-dehydrogenase (342 aa).

Position 38 (Cys38) interacts with Zn(2+). Active-site charge relay system residues include Thr40 and His43. The Zn(2+) site is built by His63, Glu64, Cys93, Cys96, Cys99, and Cys107. Residues Ile175, Asp195, Arg200, Leu262–Ile264, and Ile286–Tyr287 contribute to the NAD(+) site.

This sequence belongs to the zinc-containing alcohol dehydrogenase family. In terms of assembly, homotetramer. It depends on Zn(2+) as a cofactor.

The protein localises to the cytoplasm. The catalysed reaction is L-threonine + NAD(+) = (2S)-2-amino-3-oxobutanoate + NADH + H(+). It participates in amino-acid degradation; L-threonine degradation via oxydo-reductase pathway; glycine from L-threonine: step 1/2. Catalyzes the NAD(+)-dependent oxidation of L-threonine to 2-amino-3-ketobutyrate. In Burkholderia ambifaria (strain ATCC BAA-244 / DSM 16087 / CCUG 44356 / LMG 19182 / AMMD) (Burkholderia cepacia (strain AMMD)), this protein is L-threonine 3-dehydrogenase.